The chain runs to 448 residues: Hyaluronidase conohyal-Cn1 (448 aa).

The signal sequence occupies residues 1–18 (MRAVVVVTGLVVVVVATA). Positions 19–33 (LSLPNHDVKSATSSR) are excised as a propeptide. Residues 26–55 (VKSATSSRSSSDYQGSSGDDCDEGLPPPDQ) are disordered. Residues 31–43 (SSRSSSDYQGSSG) are compositionally biased toward low complexity. An intrachain disulfide couples Cys-67 to Cys-344. N-linked (GlcNAc...) asparagine glycosylation is present at Asn-141. The Proton donor role is filled by Glu-151. N-linked (GlcNAc...) asparagine glycosylation is found at Asn-169 and Asn-361. Cystine bridges form between Cys-369-Cys-380, Cys-374-Cys-413, and Cys-415-Cys-424. Residues 413–424 (CRCYSAWEGACC) enclose the EGF-like domain.

It belongs to the glycosyl hydrolase 56 family. In terms of tissue distribution, expressed by the venom duct.

The protein localises to the secreted. The catalysed reaction is Random hydrolysis of (1-&gt;4)-linkages between N-acetyl-beta-D-glucosamine and D-glucuronate residues in hyaluronate.. Hyaluronidase catalyzes the hydrolysis of hyaluronic acid (HA), an anionic, nonsulfated glycosaminoglycan distributed widely throughout connective, epithelial, and neural tissues. In venom, they are known to enhance diffusion of the venom by degrading the extracellular matrix. The protein is Hyaluronidase conohyal-Cn1 of Conus consors (Singed cone).